We begin with the raw amino-acid sequence, 313 residues long: Fucose-specific lectin (313 aa).

6 consecutive repeat copies span residues 5 to 57, 58 to 109, 110 to 162, 163 to 208, 209 to 260, and 261 to 304. The segment at 5 to 304 is 6 X approximate tandem repeats; sequence FLYTSKIAAI…SGKGWSIGAV (300 aa). Residues R25, E37, R78, E90, W98, Q102, R132, E147, and W154 each contribute to the beta-L-fucose site. The alpha-L-fucose site is built by R78 and E90. Q102 lines the alpha-L-fucose pocket. W154, R180, and E192 together coordinate alpha-L-fucose. Residue W200 coordinates beta-L-fucose. G204 serves as a coordination point for alpha-L-fucose. Residues R227 and E239 each contribute to the beta-L-fucose site. W246 lines the alpha-L-fucose pocket. W299 contributes to the beta-L-fucose binding site.

This sequence belongs to the fungal fucose-specific lectin family. As to quaternary structure, forms homodimers. The two AAL monomers are associated via interactions between N-terminal and C-terminal peptides. Tyr-7 interacts via aromatic ring stacking with its counterpart on the other monomer, whereas Ser-284 interacts via hydrogen bonding with Asp-264 on the other monomer.

In terms of biological role, lectin that specifically binds to L-fucose. Has strongest preference for the alpha-1,6-fucosylated chain (core fucose) on glycoproteins among alpha-1,2-, alpha-1,3-, alpha-1,4-, and alpha-1,6-fucosylated chains. Might play a role in the differentiation of the fruiting body. Exhibits antifungal activity against Mucor racemosus and thus could act as an antifungal protein in natural ecosystems. The protein is Fucose-specific lectin of Aleuria aurantia (Orange peel mushroom).